A 66-amino-acid polypeptide reads, in one-letter code: Rho-elapitoxin-Da1b (66 aa).

Intrachain disulfides connect cysteine 3-cysteine 24, cysteine 17-cysteine 42, cysteine 46-cysteine 58, and cysteine 59-cysteine 64.

The protein belongs to the three-finger toxin family. Short-chain subfamily. Aminergic toxin sub-subfamily. Expressed by the venom gland.

The protein localises to the secreted. Its function is as follows. Non-competitive antagonist of alpha-2 adrenergic receptors (ADRA2) in smooth muscles, and partial antagonist of D3 dopamine receptors (DRD3) (inhibits 25% of methylspiperone binding to this receptor). Also shows a low antagonism on D2 dopamine receptors (DRD2) (short isoform). Shows high affinity to adrenergic receptors (Ki=14 nM (ADRA2A), Ki=73 nM (ADRA2B), and Ki=38 nM (ADRA2C)). Increases heart rate and blood catecholamine concentrations. This is Rho-elapitoxin-Da1b from Dendroaspis angusticeps (Eastern green mamba).